Here is a 179-residue protein sequence, read N- to C-terminus: Inner membrane-spanning protein YciB (179 aa).

The next 5 membrane-spanning stretches (helical) occupy residues 22–42 (IYVA…FTWF), 50–70 (MTLI…VFHN), 76–96 (WKVT…QLVL), 121–141 (LAWA…AFWL), and 149–169 (FKVF…GVYI).

Belongs to the YciB family.

The protein localises to the cell inner membrane. In terms of biological role, plays a role in cell envelope biogenesis, maintenance of cell envelope integrity and membrane homeostasis. The polypeptide is Inner membrane-spanning protein YciB (Serratia proteamaculans (strain 568)).